Consider the following 352-residue polypeptide: Protein MGF 360-9L (352 aa).

The protein belongs to the asfivirus MGF 360 family. In terms of assembly, interacts with host STAT1; this interaction mediates STAT1 degradation through apoptosis. Interacts with host STAT2; this interaction mediates STAT2 degradation through the proteasome.

Its subcellular location is the host cytoplasm. In terms of biological role, plays a role in virus cell tropism, and may be required for efficient virus replication in macrophages. In addition, inhibits IFN-beta-induced IFN-stimulated genes (ISGs) transcription. Mechanistically, degrades host STAT1 and STAT2 through apoptosis and ubiquitin-proteasome pathways respectively. This is Protein MGF 360-9L from Ornithodoros (relapsing fever ticks).